Reading from the N-terminus, the 147-residue chain is Phosphoribosyl-AMP cyclohydrolase (147 aa).

D89 serves as a coordination point for Mg(2+). C90 is a Zn(2+) binding site. Mg(2+) contacts are provided by D91 and D93. Zn(2+)-binding residues include C106 and C113.

The protein belongs to the PRA-CH family. As to quaternary structure, homodimer. Mg(2+) serves as cofactor. Zn(2+) is required as a cofactor.

It is found in the cytoplasm. It carries out the reaction 1-(5-phospho-beta-D-ribosyl)-5'-AMP + H2O = 1-(5-phospho-beta-D-ribosyl)-5-[(5-phospho-beta-D-ribosylamino)methylideneamino]imidazole-4-carboxamide. It participates in amino-acid biosynthesis; L-histidine biosynthesis; L-histidine from 5-phospho-alpha-D-ribose 1-diphosphate: step 3/9. Catalyzes the hydrolysis of the adenine ring of phosphoribosyl-AMP. This chain is Phosphoribosyl-AMP cyclohydrolase, found in Nitrobacter hamburgensis (strain DSM 10229 / NCIMB 13809 / X14).